The primary structure comprises 226 residues: PKHD-type hydroxylase AZC_3753 (226 aa).

One can recognise a Fe2OG dioxygenase domain in the interval 78 to 178 (RILPPMFNRY…RVASFFWTQS (101 aa)). Positions 96, 98, and 159 each coordinate Fe cation. 2-oxoglutarate is bound at residue Arg169.

Requires Fe(2+) as cofactor. The cofactor is L-ascorbate.

This chain is PKHD-type hydroxylase AZC_3753, found in Azorhizobium caulinodans (strain ATCC 43989 / DSM 5975 / JCM 20966 / LMG 6465 / NBRC 14845 / NCIMB 13405 / ORS 571).